We begin with the raw amino-acid sequence, 151 residues long: Deoxyuridine 5'-triphosphate nucleotidohydrolase (151 aa).

Substrate is bound by residues 69 to 71, Asn82, 86 to 88, and Met96; these read RSG and LID.

The protein belongs to the dUTPase family. It depends on Mg(2+) as a cofactor.

The enzyme catalyses dUTP + H2O = dUMP + diphosphate + H(+). It functions in the pathway pyrimidine metabolism; dUMP biosynthesis; dUMP from dCTP (dUTP route): step 2/2. Its function is as follows. This enzyme is involved in nucleotide metabolism: it produces dUMP, the immediate precursor of thymidine nucleotides and it decreases the intracellular concentration of dUTP so that uracil cannot be incorporated into DNA. The protein is Deoxyuridine 5'-triphosphate nucleotidohydrolase of Blochmanniella floridana.